The chain runs to 358 residues: Alanine racemase (358 aa).

Lys-34 acts as the Proton acceptor; specific for D-alanine in catalysis. The residue at position 34 (Lys-34) is an N6-(pyridoxal phosphate)lysine. Arg-129 serves as a coordination point for substrate. Tyr-254 functions as the Proton acceptor; specific for L-alanine in the catalytic mechanism. Met-302 contacts substrate.

It belongs to the alanine racemase family. Requires pyridoxal 5'-phosphate as cofactor.

It carries out the reaction L-alanine = D-alanine. The protein operates within amino-acid biosynthesis; D-alanine biosynthesis; D-alanine from L-alanine: step 1/1. Catalyzes the interconversion of L-alanine and D-alanine. May also act on other amino acids. In Vibrio vulnificus (strain CMCP6), this protein is Alanine racemase (alr).